Here is a 590-residue protein sequence, read N- to C-terminus: (-)-alpha-terpineol synthase (590 aa).

The Mg(2+) site is built by Asp-339, Asp-343, Asp-483, Thr-487, and Glu-491. Residues 339 to 343 (DDVYD) carry the DDXXD motif motif.

This sequence belongs to the terpene synthase family. Requires Mg(2+) as cofactor.

It carries out the reaction (2E)-geranyl diphosphate + H2O = (S)-alpha-terpineol + diphosphate. Its pathway is secondary metabolite biosynthesis; terpenoid biosynthesis. Mediates the conversion of geranyl diphosphate into alpha-terpineol, a monoterpenol. Monoterpenols contribute to the final grape and wine aroma and flavor. Also forms some 1,8-cineole and traces of other monoterpenoids. The protein is (-)-alpha-terpineol synthase of Vitis vinifera (Grape).